The sequence spans 112 residues: Putative transmembrane protein ORF112 (112 aa).

Transmembrane regions (helical) follow at residues phenylalanine 26–valine 46, isoleucine 50–phenylalanine 70, and isoleucine 80–valine 100.

It localises to the host membrane. The chain is Putative transmembrane protein ORF112 from Acidianus convivator (ABV).